A 33-amino-acid chain; its full sequence is Potassium channel toxin alpha-KTx 10.5 (33 aa).

3 cysteine pairs are disulfide-bonded: Cys4/Cys23, Cys9/Cys28, and Cys13/Cys30.

In terms of tissue distribution, expressed by the venom gland.

It localises to the secreted. Its function is as follows. Inhibits less than 5% of human voltage-gated potassium (Kv) channel Kv1.3/KCNA3 currents at 100nM concentration and does not block human Kv1.1/KCNA1 and Kv1.2/KCNA2 currents. This is Potassium channel toxin alpha-KTx 10.5 from Centruroides bonito (Scorpion).